Here is a 521-residue protein sequence, read N- to C-terminus: Serine/threonine-protein kinase A (521 aa).

The region spanning 15–289 is the Protein kinase domain; that stretch reads YQLVELVGSG…DVIIRAIDAI (275 aa). ATP contacts are provided by residues 21-29 and Lys-45; that span reads VGSGAMGQV. The active-site Proton acceptor is the Asp-148.

Belongs to the protein kinase superfamily. Ser/Thr protein kinase family. Autophosphorylated.

The catalysed reaction is L-seryl-[protein] + ATP = O-phospho-L-seryl-[protein] + ADP + H(+). It catalyses the reaction L-threonyl-[protein] + ATP = O-phospho-L-threonyl-[protein] + ADP + H(+). In terms of biological role, protein kinase that regulates cellular motility via phosphorylation of membrane proteins. The sequence is that of Serine/threonine-protein kinase A (spkA) from Synechocystis sp. (strain ATCC 27184 / PCC 6803 / Kazusa).